Consider the following 476-residue polypeptide: BTB/POZ domain-containing protein KCTD8 (476 aa).

The BTB domain maps to glutamate 44 to glutamate 122. Serine 78 is subject to Phosphoserine. Arginine 80 is modified (omega-N-methylarginine). The segment at serine 331–asparagine 412 is disordered. A compositionally biased stretch (basic and acidic residues) spans lysine 333–serine 349. The span at glutamate 350 to threonine 391 shows a compositional bias: polar residues. Residue serine 413 is modified to Phosphoserine.

In terms of assembly, interacts as a tetramer with GABBR1 and GABBR2.

It localises to the presynaptic cell membrane. The protein resides in the postsynaptic cell membrane. Its function is as follows. Auxiliary subunit of GABA-B receptors that determine the pharmacology and kinetics of the receptor response. Increases agonist potency and markedly alter the G-protein signaling of the receptors by accelerating onset and promoting desensitization. This is BTB/POZ domain-containing protein KCTD8 (Kctd8) from Mus musculus (Mouse).